A 339-amino-acid chain; its full sequence is MVVKVGINGFGRIGRIVLRNAIEHGDLEVVAVNDPFIDLDYMVYMFKYDSTHGRFKGSVEVKDGKLYINNKAIAVFGEKDPANIKWGEAGAEYVVESTGVFTTTEKAGVHLKGGAKKVVISAPSADAPMFVCGVNLDAYKPEYQIVSNASCTTNCLAPLAKVIHDNFTIIEGLMTTVHATTATQKTVDGPSHKDWRGGRGAAANIIPSSTGAAKAVGKVIPSLNGKLTGMSFRVPTSDVSVVDLVCRIEKGASYEEIKNVIKKASESPELKGILGYTEDAVVSTDFIGSTESSIFDAQAGIALNANFVKLVSWYDNEYGYSRRVCDLISYIAGVDAKAQ.

Residues Arg-12–Ile-13, Asp-34, and Lys-79 contribute to the NAD(+) site. D-glyceraldehyde 3-phosphate is bound by residues Ser-150 to Thr-152, Thr-181, Thr-210 to Gly-211, and Arg-233. Catalysis depends on Cys-151, which acts as the Nucleophile. Asn-316 contacts NAD(+).

This sequence belongs to the glyceraldehyde-3-phosphate dehydrogenase family. Homotetramer.

The protein resides in the cytoplasm. It catalyses the reaction D-glyceraldehyde 3-phosphate + phosphate + NAD(+) = (2R)-3-phospho-glyceroyl phosphate + NADH + H(+). It participates in carbohydrate degradation; glycolysis; pyruvate from D-glyceraldehyde 3-phosphate: step 1/5. This chain is Glyceraldehyde-3-phosphate dehydrogenase (GPD), found in Cryptococcus neoformans var. neoformans serotype D (strain B-3501A) (Filobasidiella neoformans).